Reading from the N-terminus, the 338-residue chain is 1-aminocyclopropane-1-carboxylate deaminase (338 aa).

An N6-(pyridoxal phosphate)lysine modification is found at lysine 51. The Nucleophile role is filled by serine 78.

The protein belongs to the ACC deaminase/D-cysteine desulfhydrase family. In terms of assembly, homotrimer. Requires pyridoxal 5'-phosphate as cofactor.

It carries out the reaction 1-aminocyclopropane-1-carboxylate + H2O = 2-oxobutanoate + NH4(+). Its function is as follows. Catalyzes a cyclopropane ring-opening reaction, the irreversible conversion of 1-aminocyclopropane-1-carboxylate (ACC) to ammonia and alpha-ketobutyrate. Allows growth on ACC as a nitrogen source. The chain is 1-aminocyclopropane-1-carboxylate deaminase from Pseudomonas sp. (strain ACP).